The chain runs to 348 residues: Putative methylesterase 14, chloroplastic (348 aa).

Disordered stretches follow at residues 1–29 and 60–80; these read MGNK…MNRS and GSMS…SDPF. The transit peptide at 1–76 directs the protein to the chloroplast; it reads MGNKIISMMK…GSTSTRKRTL (76 aa). A Phosphoserine modification is found at S77. S172 serves as the catalytic Acyl-ester intermediate. Residues D299 and H327 each act as charge relay system in the active site.

Belongs to the AB hydrolase superfamily. Methylesterase family.

The protein resides in the plastid. The protein localises to the chloroplast. Functionally, putative methylesterase. The polypeptide is Putative methylesterase 14, chloroplastic (Arabidopsis thaliana (Mouse-ear cress)).